Reading from the N-terminus, the 246-residue chain is DNA polymerase sliding clamp 3 (246 aa).

Belongs to the PCNA family. As to quaternary structure, the subunits circularize to form a toroid; DNA passes through its center. Replication factor C (RFC) is required to load the toroid on the DNA. Forms dimeric complexes with PCNA1 and PCNA2, and trimeric complexes with PCNA123 and PCNA323; does not form homotrimers. Crystal structures show a heterotetramer of 2 PCNA2 and 2 PCNA3, which would be large enough to clamp a Holliday junction.

Its function is as follows. Sliding clamp subunit that acts as a moving platform for DNA processing. Responsible for tethering the catalytic subunit of DNA polymerase and other proteins to DNA during high-speed replication. Both trimeric complexes inhibit DNA ligase and both 3'-5' and 5'-3' activity of Hel308 (Hjm) helicase, but stimulate Hjc, the Holliday junction cleavage enzyme. This Sulfurisphaera tokodaii (strain DSM 16993 / JCM 10545 / NBRC 100140 / 7) (Sulfolobus tokodaii) protein is DNA polymerase sliding clamp 3.